We begin with the raw amino-acid sequence, 171 residues long: Large ribosomal subunit protein uL10 (171 aa).

It belongs to the universal ribosomal protein uL10 family. As to quaternary structure, part of the ribosomal stalk of the 50S ribosomal subunit. The N-terminus interacts with L11 and the large rRNA to form the base of the stalk. The C-terminus forms an elongated spine to which L12 dimers bind in a sequential fashion forming a multimeric L10(L12)X complex.

Its function is as follows. Forms part of the ribosomal stalk, playing a central role in the interaction of the ribosome with GTP-bound translation factors. This chain is Large ribosomal subunit protein uL10, found in Paracoccus denitrificans (strain Pd 1222).